The chain runs to 86 residues: Exodeoxyribonuclease 7 small subunit (86 aa).

Residues methionine 1–serine 26 are disordered.

This sequence belongs to the XseB family. Heterooligomer composed of large and small subunits.

The protein localises to the cytoplasm. It carries out the reaction Exonucleolytic cleavage in either 5'- to 3'- or 3'- to 5'-direction to yield nucleoside 5'-phosphates.. Bidirectionally degrades single-stranded DNA into large acid-insoluble oligonucleotides, which are then degraded further into small acid-soluble oligonucleotides. This chain is Exodeoxyribonuclease 7 small subunit, found in Helicobacter pylori (strain Shi470).